The primary structure comprises 113 residues: T cell receptor alpha variable 13-2 (113 aa).

A signal peptide spans 1-21 (MAGIRALFMYLWLQLDWVSRG). The 92-residue stretch at 22–113 (ESVGLHLPTL…DSAVYFCAEN (92 aa)) folds into the Ig-like domain. Cys-43 and Cys-110 form a disulfide bridge. Residue Asn-87 is glycosylated (N-linked (GlcNAc...) asparagine).

In terms of assembly, alpha-beta TR is a heterodimer composed of an alpha and beta chain; disulfide-linked. The alpha-beta TR is associated with the transmembrane signaling CD3 coreceptor proteins to form the TR-CD3 (TcR or TCR). The assembly of alpha-beta TR heterodimers with CD3 occurs in the endoplasmic reticulum where a single alpha-beta TR heterodimer associates with one CD3D-CD3E heterodimer, one CD3G-CD3E heterodimer and one CD247 homodimer forming a stable octameric structure. CD3D-CD3E and CD3G-CD3E heterodimers preferentially associate with TR alpha and TR beta chains, respectively. The association of the CD247 homodimer is the last step of TcR assembly in the endoplasmic reticulum and is required for transport to the cell surface.

It is found in the cell membrane. Functionally, v region of the variable domain of T cell receptor (TR) alpha chain that participates in the antigen recognition. Alpha-beta T cell receptors are antigen specific receptors which are essential to the immune response and are present on the cell surface of T lymphocytes. Recognize peptide-major histocompatibility (MH) (pMH) complexes that are displayed by antigen presenting cells (APC), a prerequisite for efficient T cell adaptive immunity against pathogens. Binding of alpha-beta TR to pMH complex initiates TR-CD3 clustering on the cell surface and intracellular activation of LCK that phosphorylates the ITAM motifs of CD3G, CD3D, CD3E and CD247 enabling the recruitment of ZAP70. In turn ZAP70 phosphorylates LAT, which recruits numerous signaling molecules to form the LAT signalosome. The LAT signalosome propagates signal branching to three major signaling pathways, the calcium, the mitogen-activated protein kinase (MAPK) kinase and the nuclear factor NF-kappa-B (NF-kB) pathways, leading to the mobilization of transcription factors that are critical for gene expression and essential for T cell growth and differentiation. The T cell repertoire is generated in the thymus, by V-(D)-J rearrangement. This repertoire is then shaped by intrathymic selection events to generate a peripheral T cell pool of self-MH restricted, non-autoaggressive T cells. Post-thymic interaction of alpha-beta TR with the pMH complexes shapes TR structural and functional avidity. The sequence is that of T cell receptor alpha variable 13-2 from Homo sapiens (Human).